The sequence spans 146 residues: Hemoglobin subunit beta (146 aa).

Val-1 is subject to N-acetylvaline. Positions His-2–His-146 constitute a Globin domain. Thr-12 is modified (phosphothreonine). Ser-44 carries the post-translational modification Phosphoserine. At Lys-59 the chain carries N6-acetyllysine. A heme b-binding site is contributed by His-63. Lys-82 bears the N6-acetyllysine mark. His-92 is a binding site for heme b. At Cys-93 the chain carries S-nitrosocysteine. Lys-144 is subject to N6-acetyllysine.

Belongs to the globin family. In terms of assembly, heterotetramer of two alpha chains and two beta chains. As to expression, red blood cells.

Its function is as follows. Involved in oxygen transport from the lung to the various peripheral tissues. The polypeptide is Hemoglobin subunit beta (HBB) (Ursus maritimus (Polar bear)).